Consider the following 204-residue polypeptide: FMN-dependent NADH:quinone oxidoreductase 1 (204 aa).

Residues serine 10 and 15-17 contribute to the FMN site; that span reads SLS.

It belongs to the azoreductase type 1 family. Homodimer. FMN is required as a cofactor.

It carries out the reaction 2 a quinone + NADH + H(+) = 2 a 1,4-benzosemiquinone + NAD(+). The catalysed reaction is N,N-dimethyl-1,4-phenylenediamine + anthranilate + 2 NAD(+) = 2-(4-dimethylaminophenyl)diazenylbenzoate + 2 NADH + 2 H(+). Quinone reductase that provides resistance to thiol-specific stress caused by electrophilic quinones. Functionally, also exhibits azoreductase activity. Catalyzes the reductive cleavage of the azo bond in aromatic azo compounds to the corresponding amines. In Rhizobium etli (strain ATCC 51251 / DSM 11541 / JCM 21823 / NBRC 15573 / CFN 42), this protein is FMN-dependent NADH:quinone oxidoreductase 1.